The primary structure comprises 501 residues: Probable cytochrome P450 508A4 (501 aa).

The chain crosses the membrane as a helical span at residues 1–21 (MIMLIKVFVLLLVVYILHNSY). Residue cysteine 445 coordinates heme.

Belongs to the cytochrome P450 family. Heme serves as cofactor.

It localises to the membrane. The protein is Probable cytochrome P450 508A4 (cyp508A4) of Dictyostelium discoideum (Social amoeba).